The chain runs to 350 residues: GDSL esterase/lipase At2g42990 (350 aa).

The N-terminal stretch at 1-24 is a signal peptide; sequence MATHYLSPSILCIILTTLVSIAGA. Ser35 functions as the Nucleophile in the catalytic mechanism. 3 N-linked (GlcNAc...) asparagine glycosylation sites follow: Asn98, Asn117, and Asn141. Active-site residues include Asp325 and His328.

It belongs to the 'GDSL' lipolytic enzyme family.

The protein resides in the secreted. The sequence is that of GDSL esterase/lipase At2g42990 from Arabidopsis thaliana (Mouse-ear cress).